The sequence spans 477 residues: Transmembrane and coiled-coil domain protein 3 (477 aa).

At S46 the chain carries Phosphoserine. Positions 112–153 form a coiled coil; that stretch reads KQVFEKKNQKSAHSIAQLQKKLEQYHRKLREIEQNGASRSSK. 2 disordered regions span residues 168-188 and 249-277; these read KDAH…KSGM and PKYG…GAGG. A Phosphoserine modification is found at S253. A compositionally biased stretch (polar residues) spans 258 to 273; that stretch reads SSGTSGSADSNGNQSF. Residues 282–398 adopt a coiled-coil conformation; that stretch reads DSQGKLAVIL…KLELHQQEQQ (117 aa). The next 2 membrane-spanning stretches (helical) occupy residues 417–437 and 450–470; these read VILA…KFVS and FFAV…LCAI.

The protein belongs to the TEX28 family. May form homodimers and heterodimers with TMCC2 or TMCC3 via the coiled-coil domains. Interacts with ribosomal proteins RPL4 and RPS6. In terms of tissue distribution, widely expressed, with highest levels in brain, spinal cord and testis.

The protein localises to the endoplasmic reticulum membrane. The polypeptide is Transmembrane and coiled-coil domain protein 3 (Homo sapiens (Human)).